Consider the following 64-residue polypeptide: Defensin beta 4A (64 aa).

A signal peptide spans 1–23; sequence MRVLYLLFSFLFIFLMPLPGVFG. Cystine bridges form between C31/C60, C38/C53, and C43/C61. A phosphatidylinositol 4,5-bisphosphate (PIP2) binding region spans residues 33 to 48; the sequence is KSGAICHPVFCPRRYK.

Belongs to the beta-defensin family. LAP/TAP subfamily. In terms of assembly, monomer. Homodimer. As to expression, expressed in lung epithelial cells (at protein level). Expressed in foreskin, lung and trachea. Lower expression in kidney, uterus and salivary gland tissue. Expressed in epithelial cells of the respiratory tract, with higher expression in distal parenchyma of the lung, trachea, and tonsils, and lower expression in pharynx and adenoid, and low expression in tongue and larynx.

It is found in the secreted. Its function is as follows. Exhibits antimicrobial activity against Gram-negative bacteria and Gram-positive bacteria, with highest activity against Gram-negative bacteria. Antimicrobial activity against P.aruginosa seems to be salt-sensitive and is reduced with high salt concentrations greater than 25 mM. Also exhibits antimicrobial activity against the yeast C.albicans. Permeabilizes C.albicans cell membranes via targeting plasma membrane lipid phosphatidylinositol 4,5-bisphosphate (PIP2), thereby leading to cell fragmentation and cell death. Acts as a ligand for C-C chemokine receptor CCR6. Binds to CCR6 and induces chemotactic activity of CCR6-expressing cells, such as immature dendritic cells and memory T cells. In Homo sapiens (Human), this protein is Defensin beta 4A (DEFB4A).